The sequence spans 536 residues: Membrane protein insertase YidC (536 aa).

A helical transmembrane segment spans residues 7–27 (IIAVVLSLFVLIGWSYLSEFM). The interval 43–70 (VQQKASEPVAQPVQTASAPAASSFAPTE) is disordered. Low complexity predominate over residues 58–68 (ASAPAASSFAP). The next 3 helical transmembrane spans lie at 346 to 366 (GNYG…FWPL), 415 to 435 (GGCL…QGLL), and 495 to 515 (IMMF…AGLV).

This sequence belongs to the OXA1/ALB3/YidC family. Type 1 subfamily. In terms of assembly, interacts with the Sec translocase complex via SecD. Specifically interacts with transmembrane segments of nascent integral membrane proteins during membrane integration.

The protein resides in the cell inner membrane. In terms of biological role, required for the insertion and/or proper folding and/or complex formation of integral membrane proteins into the membrane. Involved in integration of membrane proteins that insert both dependently and independently of the Sec translocase complex, as well as at least some lipoproteins. Aids folding of multispanning membrane proteins. The protein is Membrane protein insertase YidC of Oleidesulfovibrio alaskensis (strain ATCC BAA-1058 / DSM 17464 / G20) (Desulfovibrio alaskensis).